Reading from the N-terminus, the 240-residue chain is 1-(5-phosphoribosyl)-5-[(5-phosphoribosylamino)methylideneamino] imidazole-4-carboxamide isomerase (240 aa).

Aspartate 8 serves as the catalytic Proton acceptor. The Proton donor role is filled by aspartate 129.

Belongs to the HisA/HisF family.

The protein localises to the cytoplasm. It catalyses the reaction 1-(5-phospho-beta-D-ribosyl)-5-[(5-phospho-beta-D-ribosylamino)methylideneamino]imidazole-4-carboxamide = 5-[(5-phospho-1-deoxy-D-ribulos-1-ylimino)methylamino]-1-(5-phospho-beta-D-ribosyl)imidazole-4-carboxamide. Its pathway is amino-acid biosynthesis; L-histidine biosynthesis; L-histidine from 5-phospho-alpha-D-ribose 1-diphosphate: step 4/9. The sequence is that of 1-(5-phosphoribosyl)-5-[(5-phosphoribosylamino)methylideneamino] imidazole-4-carboxamide isomerase from Listeria monocytogenes serotype 4a (strain HCC23).